The sequence spans 131 residues: MSGMRKEKLQEELKKIISDILQREVKDPSVGFVTVTSVDLSGDLRHAKVFVSILGEKENQQDSLRGLEKATGFIRSELGKRVRLRHVPEIVFKFDESIEHGDHINKLLKQMNLGEDNEDNEDKENNDPGEE.

The segment at 110–131 (QMNLGEDNEDNEDKENNDPGEE) is disordered. Positions 115–131 (EDNEDNEDKENNDPGEE) are enriched in acidic residues.

The protein belongs to the RbfA family. As to quaternary structure, monomer. Binds 30S ribosomal subunits, but not 50S ribosomal subunits or 70S ribosomes.

It is found in the cytoplasm. In terms of biological role, one of several proteins that assist in the late maturation steps of the functional core of the 30S ribosomal subunit. Associates with free 30S ribosomal subunits (but not with 30S subunits that are part of 70S ribosomes or polysomes). Required for efficient processing of 16S rRNA. May interact with the 5'-terminal helix region of 16S rRNA. This is Ribosome-binding factor A from Natranaerobius thermophilus (strain ATCC BAA-1301 / DSM 18059 / JW/NM-WN-LF).